We begin with the raw amino-acid sequence, 245 residues long: MALPLIKPKESEESHLALLSKIHVSKNWKLPPRLPHRAAQRRKRVHRLHEDYETEENDEELQKKKRQNRDAQRAYRERKNNKLQVLEETIESLSKVVKNYETKLNRLQNELQAKESENHALKQKLETLTLKQASVPAQDPILQNLIENFKPMKAIPIKYNTAIKRHQHSTELPSSVKCGFCNDNTTCVCKELETDHRKSDDGVATEQKDMSMPHAECNNKDNPNGLCSNCTNIDKSCIDIRSIIH.

Residues 34-47 show a composition bias toward basic residues; it reads LPHRAAQRRKRVHR. The tract at residues 34–77 is disordered; that stretch reads LPHRAAQRRKRVHRLHEDYETEENDEELQKKKRQNRDAQRAYRE. A bZIP domain is found at 58–121; that stretch reads DEELQKKKRQ…QAKESENHAL (64 aa). Residues 63–82 form a basic motif region; it reads KKKRQNRDAQRAYRERKNNK. Basic and acidic residues predominate over residues 68 to 77; that stretch reads NRDAQRAYRE. The segment at 86–114 is leucine-zipper; it reads LEETIESLSKVVKNYETKLNRLQNELQAK.

This sequence belongs to the bZIP family. YAP subfamily. In terms of assembly, homodimer.

The protein localises to the cytoplasm. Its subcellular location is the nucleus. In terms of biological role, transcription activator involved in the regulation of genes expressed in response to environmental changes and metabolic requirements. According to genome-wide promoter binding and gene expression studies it is a coregulator for the expression of ribosomal genes, while its own expression is induced by the cell cycle specific activator SBF (SWI4-SWI6). In Saccharomyces cerevisiae (strain ATCC 204508 / S288c) (Baker's yeast), this protein is AP-1-like transcription factor YAP5 (YAP5).